Here is a 224-residue protein sequence, read N- to C-terminus: Uracil-DNA glycosylase 2 (224 aa).

Catalysis depends on aspartate 64, which acts as the Proton acceptor.

This sequence belongs to the uracil-DNA glycosylase (UDG) superfamily. UNG family.

The protein localises to the cytoplasm. It carries out the reaction Hydrolyzes single-stranded DNA or mismatched double-stranded DNA and polynucleotides, releasing free uracil.. Its function is as follows. Excises uracil residues from the DNA which can arise as a result of misincorporation of dUMP residues by DNA polymerase or due to deamination of cytosine. This chain is Uracil-DNA glycosylase 2, found in Listeria monocytogenes serotype 4b (strain F2365).